The sequence spans 96 residues: Ferredoxin-1 (96 aa).

The region spanning 1 to 95 (MKVIINGKEF…DCDEIVIESE (95 aa)) is the 2Fe-2S ferredoxin-type domain. [2Fe-2S] cluster is bound by residues cysteine 34, cysteine 39, cysteine 42, and cysteine 78. Cysteine 52 and cysteine 87 form a disulfide bridge.

This sequence belongs to the 2Fe2S plant-type ferredoxin family. Requires [2Fe-2S] cluster as cofactor.

In terms of biological role, ferredoxins are iron-sulfur proteins that transfer electrons in a wide variety of metabolic reactions. This is Ferredoxin-1 (fdx1) from Aquifex aeolicus (strain VF5).